Reading from the N-terminus, the 191-residue chain is Ferric nitrobindin-like protein (191 aa).

Positions 20–26 match the GXWXGXG motif; that stretch reads GDWAGAG.

It belongs to the nitrobindin family.

In Streptomyces coelicolor (strain ATCC BAA-471 / A3(2) / M145), this protein is Ferric nitrobindin-like protein.